The primary structure comprises 249 residues: Probable aquaporin TIP-type (249 aa).

A run of 2 helical transmembrane segments spans residues A22–I42 and A56–G76. The NPA 1 motif lies at N85–A87. Transmembrane regions (helical) follow at residues I103 to V123, V137 to V157, and I169 to G189. The short motif at N197–A199 is the NPA 2 element. The helical transmembrane segment at Y217–I237 threads the bilayer.

The protein belongs to the MIP/aquaporin (TC 1.A.8) family. TIP (TC 1.A.8.10) subfamily. Expression is highest in root tips, with slightly lower levels of hybridizing mRNA in stems, and whole roots, and much lower levels in nodules and leaves.

The protein localises to the membrane. Its function is as follows. Aquaporins facilitate the transport of water and small neutral solutes across cell membranes. This is Probable aquaporin TIP-type (MCP1) from Medicago sativa (Alfalfa).